We begin with the raw amino-acid sequence, 491 residues long: Glutamyl-tRNA(Gln) amidotransferase subunit A (491 aa).

Residues K76 and S154 each act as charge relay system in the active site. Catalysis depends on S178, which acts as the Acyl-ester intermediate.

Belongs to the amidase family. GatA subfamily. As to quaternary structure, heterotrimer of A, B and C subunits.

It carries out the reaction L-glutamyl-tRNA(Gln) + L-glutamine + ATP + H2O = L-glutaminyl-tRNA(Gln) + L-glutamate + ADP + phosphate + H(+). Its function is as follows. Allows the formation of correctly charged Gln-tRNA(Gln) through the transamidation of misacylated Glu-tRNA(Gln) in organisms which lack glutaminyl-tRNA synthetase. The reaction takes place in the presence of glutamine and ATP through an activated gamma-phospho-Glu-tRNA(Gln). The chain is Glutamyl-tRNA(Gln) amidotransferase subunit A from Cereibacter sphaeroides (strain ATCC 17025 / ATH 2.4.3) (Rhodobacter sphaeroides).